We begin with the raw amino-acid sequence, 74 residues long: uncharacterized protein (74 aa).

This is an uncharacterized protein from Salmonella typhimurium.